An 823-amino-acid polypeptide reads, in one-letter code: Dolichyl-diphosphooligosaccharide--protein glycosyltransferase subunit STT3B (823 aa).

The interval M1–G58 is disordered. A2 bears the N-acetylalanine mark. The Cytoplasmic portion of the chain corresponds to A2 to A41. A phosphoserine mark is found at S13, S18, and S29. Residues S42–S83 traverse the membrane as a helical segment. Over S84–L170 the chain is Lumenal. A DXD motif 1 motif is present at residues E98–D100. D100 is a Mn(2+) binding site. Residues A171–L189 traverse the membrane as a helical segment. Topologically, residues W190–N191 are cytoplasmic. Residues Q192–I209 traverse the membrane as a helical segment. The Lumenal portion of the chain corresponds to S210–E220. Mn(2+) is bound by residues D218 and E220. The DXD motif 2 signature appears at D218–E220. Residues G221–T240 traverse the membrane as a helical segment. Topologically, residues G241–S242 are cytoplasmic. Residues V243 to V257 form a helical membrane-spanning segment. At S258 to G262 the chain is on the lumenal side. The helical transmembrane segment at Y263–L279 threads the bilayer. At M280–S284 the chain is on the cytoplasmic side. The chain crosses the membrane as a helical span at residues K285–F310. The Lumenal portion of the chain corresponds to Q311–H318. The chain crosses the membrane as a helical span at residues M319 to R338. At D339–Q347 the chain is on the cytoplasmic side. Residues T348–L368 traverse the membrane as a helical segment. The Lumenal segment spans residues T369 to T407. The SVSE motif signature appears at S399 to E402. A helical membrane pass occupies residues W408–I430. Over K431–E436 the chain is Cytoplasmic. Residues R437–V453 form a helical membrane-spanning segment. At M454–L457 the chain is on the lumenal side. R456 is a dolichyl diphosphooligosaccharide binding site. Residues M458–H479 form a helical membrane-spanning segment. At Y480 to K523 the chain is on the cytoplasmic side. Positions R487 to E526 are disordered. Phosphoserine is present on residues S495 and S496. Over residues H517–E526 the composition is skewed to basic and acidic residues. A helical transmembrane segment spans residues P524–V549. Residues H550–V823 are Lumenal-facing. The tract at residues W601–D603 is interacts with target acceptor peptide in protein substrate. Residues W601–G605 carry the WWDYG motif motif. Residue Y606 participates in dolichyl diphosphooligosaccharide binding. Residues N613 and N620 are each glycosylated (N-linked (GlcNAc...) asparagine). The N-linked (GlcNAc...) (high mannose) asparagine glycan is linked to N624. N638 is a glycosylation site (N-linked (GlcNAc...) asparagine). Positions D668–M675 match the DK motif motif.

It belongs to the STT3 family. As to quaternary structure, component of the oligosaccharyltransferase (OST) complex. There are 2 OST complexes, OST-A and OST-B, which contain STT3A or STT3B as catalytic subunit, respectively. OST-A and OST-B contain common core subunits RPN1, RPN2, OST48, OST4, DAD1 and TMEM258, and OST-B contains either MAGT1 or TUSC3 as specific accessory subunit. Mg(2+) serves as cofactor. It depends on Mn(2+) as a cofactor.

The protein localises to the endoplasmic reticulum membrane. It carries out the reaction a di-trans,poly-cis-dolichyl diphosphooligosaccharide + L-asparaginyl-[protein] = N(4)-(oligosaccharide-(1-&gt;4)-N-acetyl-beta-D-glucosaminyl-(1-&gt;4)-N-acetyl-beta-D-glucosaminyl)-L-asparaginyl-[protein] + a di-trans,poly-cis-dolichyl diphosphate + H(+). Its pathway is protein modification; protein glycosylation. Functionally, catalytic subunit of the oligosaccharyl transferase (OST) complex that catalyzes the initial transfer of a defined glycan (Glc(3)Man(9)GlcNAc(2) in eukaryotes) from the lipid carrier dolichol-pyrophosphate to an asparagine residue within an Asn-X-Ser/Thr consensus motif in nascent polypeptide chains, the first step in protein N-glycosylation. N-glycosylation occurs cotranslationally and the complex associates with the Sec61 complex at the channel-forming translocon complex that mediates protein translocation across the endoplasmic reticulum (ER). All subunits are required for a maximal enzyme activity. This subunit contains the active site and the acceptor peptide and donor lipid-linked oligosaccharide (LLO) binding pockets. STT3B is present in a small subset of OST complexes and mediates both cotranslational and post-translational N-glycosylation of target proteins: STT3B-containing complexes are required for efficient post-translational glycosylation and while they are less competent than STT3A-containing complexes for cotranslational glycosylation, they have the ability to mediate glycosylation of some nascent sites that are not accessible for STT3A. STT3B-containing complexes also act post-translationally and mediate modification of skipped glycosylation sites in unfolded proteins. Plays a role in ER-associated degradation (ERAD) pathway that mediates ubiquitin-dependent degradation of misfolded endoplasmic reticulum proteins by mediating N-glycosylation of unfolded proteins, which are then recognized by the ERAD pathway and targeted for degradation. The protein is Dolichyl-diphosphooligosaccharide--protein glycosyltransferase subunit STT3B of Mus musculus (Mouse).